Here is a 53-residue protein sequence, read N- to C-terminus: uncharacterized protein (53 aa).

The protein belongs to the ELIP/psbS family.

Its subcellular location is the plastid. It localises to the chloroplast. In terms of biological role, possible role in chlorophyll and/or carotenoid binding. This is an uncharacterized protein from Guillardia theta (Cryptophyte).